Reading from the N-terminus, the 420-residue chain is CinA-like protein (420 aa).

Belongs to the CinA family.

In Syntrophus aciditrophicus (strain SB), this protein is CinA-like protein.